Here is a 143-residue protein sequence, read N- to C-terminus: Small ribosomal subunit protein eS12 (143 aa).

Residues Lys85, Lys95, and Lys114 each participate in a glycyl lysine isopeptide (Lys-Gly) (interchain with G-Cter in ubiquitin) cross-link.

This sequence belongs to the eukaryotic ribosomal protein eS12 family. Component of the small ribosomal subunit (SSU). Mature yeast ribosomes consist of a small (40S) and a large (60S) subunit. The 40S small subunit contains 1 molecule of ribosomal RNA (18S rRNA) and 33 different proteins (encoded by 57 genes). The large 60S subunit contains 3 rRNA molecules (25S, 5.8S and 5S rRNA) and 46 different proteins (encoded by 81 genes).

Its subcellular location is the cytoplasm. Component of the ribosome, a large ribonucleoprotein complex responsible for the synthesis of proteins in the cell. The small ribosomal subunit (SSU) binds messenger RNAs (mRNAs) and translates the encoded message by selecting cognate aminoacyl-transfer RNA (tRNA) molecules. The large subunit (LSU) contains the ribosomal catalytic site termed the peptidyl transferase center (PTC), which catalyzes the formation of peptide bonds, thereby polymerizing the amino acids delivered by tRNAs into a polypeptide chain. The nascent polypeptides leave the ribosome through a tunnel in the LSU and interact with protein factors that function in enzymatic processing, targeting, and the membrane insertion of nascent chains at the exit of the ribosomal tunnel. The sequence is that of Small ribosomal subunit protein eS12 from Saccharomyces cerevisiae (strain ATCC 204508 / S288c) (Baker's yeast).